Here is a 961-residue protein sequence, read N- to C-terminus: Probable exosome complex exonuclease RRP44 (961 aa).

The PINc domain maps to 73 to 188 (HALIVDSTSL…LVFDEDSKKR (116 aa)). The CSD1 domain occupies 232 to 338 (IFDEYLSHDR…DEENDDENDE (107 aa)). The segment at 322 to 346 (ADDMGNEDEENDDENDEPKAKKSKK) is disordered. The segment covering 325-337 (MGNEDEENDDEND) has biased composition (acidic residues). Positions 381 to 447 (LFCPAERLIP…ENEVLLLEHD (67 aa)) constitute a CSD2 domain. One can recognise an RNB domain in the interval 479-809 (RVDLRDLTIC…IVHRLLAAAI (331 aa)).

It belongs to the RNR ribonuclease family. In terms of assembly, component of the RNA exosome complex. Ubiquitously expressed.

The protein localises to the nucleus. It localises to the nucleoplasm. Its function is as follows. Putative catalytic component of the RNA exosome complex which has 3'-&gt;5' exoribonuclease activity and participates in a multitude of cellular RNA processing and degradation events. Has both 3'-5' exonuclease and endonuclease activities. Involved in regulation of antisense ribosomal siRNA production. This chain is Probable exosome complex exonuclease RRP44 (dis-3), found in Caenorhabditis elegans.